The chain runs to 377 residues: Homoserine O-succinyltransferase (377 aa).

Positions 50-359 (NAVLVCHALS…SSHGHDSFLM (310 aa)) constitute an AB hydrolase-1 domain. S156 (nucleophile) is an active-site residue. Position 226 (R226) interacts with substrate. Active-site residues include D321 and H354. Residue D355 coordinates substrate.

Belongs to the AB hydrolase superfamily. MetX family. Homodimer.

Its subcellular location is the cytoplasm. It carries out the reaction L-homoserine + succinyl-CoA = O-succinyl-L-homoserine + CoA. The protein operates within amino-acid biosynthesis; L-methionine biosynthesis via de novo pathway; O-succinyl-L-homoserine from L-homoserine: step 1/1. In terms of biological role, transfers a succinyl group from succinyl-CoA to L-homoserine, forming succinyl-L-homoserine. The polypeptide is Homoserine O-succinyltransferase (Nitrosospira multiformis (strain ATCC 25196 / NCIMB 11849 / C 71)).